The sequence spans 259 residues: MFLIDDTALMALIREDVPAGDLTTRSLGLAAEAGELTMRARGAMTVACSEEAVRILQLLGAEAWIATASGRQVEGGEMLLFARGQVEALLAGWKVAQNLIEWASGLASSATAIVAAARAVNPAVTVACTRKSVPGTRALSLRAVTVGGATVHRTGLSDSVLLFAEHRAFGGADALAAQIARLRASCPERKVVVEVADVAEALAAAQAGAEVLQLEKFPPEQVAAVVAGLGPDWRGHVAAAGGITAANAAPMRRRGRRFW.

The protein belongs to the NadC/ModD family.

This is Putative pyrophosphorylase ModD (modD) from Rhodobacter capsulatus (Rhodopseudomonas capsulata).